A 194-amino-acid polypeptide reads, in one-letter code: Imidazoleglycerol-phosphate dehydratase (194 aa).

It belongs to the imidazoleglycerol-phosphate dehydratase family.

The protein resides in the cytoplasm. The enzyme catalyses D-erythro-1-(imidazol-4-yl)glycerol 3-phosphate = 3-(imidazol-4-yl)-2-oxopropyl phosphate + H2O. The protein operates within amino-acid biosynthesis; L-histidine biosynthesis; L-histidine from 5-phospho-alpha-D-ribose 1-diphosphate: step 6/9. This is Imidazoleglycerol-phosphate dehydratase from Oceanobacillus iheyensis (strain DSM 14371 / CIP 107618 / JCM 11309 / KCTC 3954 / HTE831).